A 153-amino-acid polypeptide reads, in one-letter code: E3 ubiquitin-protein ligase AIRP1 (153 aa).

An RING-type; atypical zinc finger spans residues 104–145 (CPICLEEYEIDNPKLLTKCGHDFHLACILAWMERSEACPVCD).

It is found in the cytoplasm. The protein resides in the cytosol. It carries out the reaction S-ubiquitinyl-[E2 ubiquitin-conjugating enzyme]-L-cysteine + [acceptor protein]-L-lysine = [E2 ubiquitin-conjugating enzyme]-L-cysteine + N(6)-ubiquitinyl-[acceptor protein]-L-lysine.. Functionally, possesses E3 ubiquitin-protein ligase activity in vitro when associated with the E2 enzyme UBC8 in vitro. Plays combinatory roles with AIRP2 in the positive regulation of the abscisic acid-mediated drought stress response. The chain is E3 ubiquitin-protein ligase AIRP1 from Arabidopsis thaliana (Mouse-ear cress).